Consider the following 1710-residue polypeptide: Protein NETWORKED 1B (1710 aa).

The NAB domain maps to 13 to 92; it reads YSWWWDSHIP…ERYDHTTVEL (80 aa). The disordered stretch occupies residues 113–159; it reads EDSASSSSEPRTEADTEALQKDGTKSKRSFSQMNKLDGTSDSHEADS. Composition is skewed to basic and acidic residues over residues 122–137 and 150–159; these read PRTE…DGTK and GTSDSHEADS. Coiled coils occupy residues 152-446, 474-546, 579-883, 974-1021, 1095-1259, and 1285-1336; these read SDSH…ELGA, QMLR…EIHC, VKKL…IDSL, HQCG…FESL, VSSL…LQEK, and LILE…LSAY. The interval 1409–1448 is disordered; the sequence is RLSRQITRSTSQKRRDRRKIENIQPDDQVTGESRQPRLRP. The stretch at 1559–1665 forms a coiled coil; the sequence is RRLSSLRISL…VLKLEDGTKS (107 aa).

It belongs to the NET family. As to expression, expressed in root meristems and at very low levels throughout mature vasculature.

Its function is as follows. Plant-specific actin binding protein. May be part of a membrane-cytoskeletal adapter complex. The protein is Protein NETWORKED 1B of Arabidopsis thaliana (Mouse-ear cress).